A 412-amino-acid chain; its full sequence is Multifunctional CCA protein (412 aa).

ATP contacts are provided by glycine 8 and arginine 11. Glycine 8 and arginine 11 together coordinate CTP. Mg(2+) is bound by residues aspartate 21 and aspartate 23. Residues arginine 91, arginine 137, and arginine 140 each coordinate ATP. Residues arginine 91, arginine 137, and arginine 140 each coordinate CTP. In terms of domain architecture, HD spans 228–329; it reads TGIHTLMTLS…VKLFDSIDAW (102 aa).

It belongs to the tRNA nucleotidyltransferase/poly(A) polymerase family. Bacterial CCA-adding enzyme type 1 subfamily. Monomer. Can also form homodimers and oligomers. The cofactor is Mg(2+). Ni(2+) serves as cofactor.

It carries out the reaction a tRNA precursor + 2 CTP + ATP = a tRNA with a 3' CCA end + 3 diphosphate. The catalysed reaction is a tRNA with a 3' CCA end + 2 CTP + ATP = a tRNA with a 3' CCACCA end + 3 diphosphate. In terms of biological role, catalyzes the addition and repair of the essential 3'-terminal CCA sequence in tRNAs without using a nucleic acid template. Adds these three nucleotides in the order of C, C, and A to the tRNA nucleotide-73, using CTP and ATP as substrates and producing inorganic pyrophosphate. tRNA 3'-terminal CCA addition is required both for tRNA processing and repair. Also involved in tRNA surveillance by mediating tandem CCA addition to generate a CCACCA at the 3' terminus of unstable tRNAs. While stable tRNAs receive only 3'-terminal CCA, unstable tRNAs are marked with CCACCA and rapidly degraded. The chain is Multifunctional CCA protein from Escherichia coli O7:K1 (strain IAI39 / ExPEC).